We begin with the raw amino-acid sequence, 309 residues long: Methionyl-tRNA formyltransferase (309 aa).

A (6S)-5,6,7,8-tetrahydrofolate-binding site is contributed by 112–115; that stretch reads SLLP.

It belongs to the Fmt family.

It carries out the reaction L-methionyl-tRNA(fMet) + (6R)-10-formyltetrahydrofolate = N-formyl-L-methionyl-tRNA(fMet) + (6S)-5,6,7,8-tetrahydrofolate + H(+). Its function is as follows. Attaches a formyl group to the free amino group of methionyl-tRNA(fMet). The formyl group appears to play a dual role in the initiator identity of N-formylmethionyl-tRNA by promoting its recognition by IF2 and preventing the misappropriation of this tRNA by the elongation apparatus. This is Methionyl-tRNA formyltransferase from Bartonella tribocorum (strain CIP 105476 / IBS 506).